Reading from the N-terminus, the 220-residue chain is Ribonuclease HII (220 aa).

One can recognise an RNase H type-2 domain in the interval 32 to 220; sequence KHIAGIDEAG…FAPIKGRFDC (189 aa). 3 residues coordinate a divalent metal cation: D38, E39, and D130.

The protein belongs to the RNase HII family. Requires Mn(2+) as cofactor. Mg(2+) is required as a cofactor.

The protein resides in the cytoplasm. The enzyme catalyses Endonucleolytic cleavage to 5'-phosphomonoester.. Functionally, endonuclease that specifically degrades the RNA of RNA-DNA hybrids. The protein is Ribonuclease HII of Brucella ovis (strain ATCC 25840 / 63/290 / NCTC 10512).